A 537-amino-acid polypeptide reads, in one-letter code: Probable protein kinase UbiB (537 aa).

Residues Leu24–Trp44 traverse the membrane as a helical segment. The Protein kinase domain maps to Arg126–Leu494. ATP contacts are provided by residues Leu132–Val140 and Lys154. Catalysis depends on Asp289, which acts as the Proton acceptor. 2 helical membrane-spanning segments follow: residues Ala493–Val513 and Leu515–Val535.

This sequence belongs to the ABC1 family. UbiB subfamily.

It is found in the cell inner membrane. It functions in the pathway cofactor biosynthesis; ubiquinone biosynthesis [regulation]. Its function is as follows. Is probably a protein kinase regulator of UbiI activity which is involved in aerobic coenzyme Q (ubiquinone) biosynthesis. The chain is Probable protein kinase UbiB from Pseudomonas entomophila (strain L48).